The following is a 222-amino-acid chain: MFDEKNKFTDASFENCDLKNPADRDTLKQAADELLKMHRGKEEVCADVEEEKNESTDLLATLQDENKELKDQFLRLAADMENLRRRTIRDVADAKIYSIANFARDMLSVSDNLNRALEAIPADARESDTNLKMLAEGVEMTERAMMAALEHHGVKKICPEGQKFDPNFHQAMFEISNSDVPDNTVQQVVQAGYIIGERVLRPAMVGVAKGGPKENSTEADSA.

The protein belongs to the GrpE family. As to quaternary structure, homodimer.

It localises to the cytoplasm. In terms of biological role, participates actively in the response to hyperosmotic and heat shock by preventing the aggregation of stress-denatured proteins, in association with DnaK and GrpE. It is the nucleotide exchange factor for DnaK and may function as a thermosensor. Unfolded proteins bind initially to DnaJ; upon interaction with the DnaJ-bound protein, DnaK hydrolyzes its bound ATP, resulting in the formation of a stable complex. GrpE releases ADP from DnaK; ATP binding to DnaK triggers the release of the substrate protein, thus completing the reaction cycle. Several rounds of ATP-dependent interactions between DnaJ, DnaK and GrpE are required for fully efficient folding. The sequence is that of Protein GrpE from Bartonella bacilliformis (strain ATCC 35685 / KC583 / Herrer 020/F12,63).